Here is a 183-residue protein sequence, read N- to C-terminus: Shikimate kinase (183 aa).

15-20 lines the ATP pocket; it reads GSGKST. Residue serine 19 participates in Mg(2+) binding. Substrate contacts are provided by aspartate 37, arginine 61, and glycine 85. Residue arginine 123 participates in ATP binding. Position 142 (arginine 142) interacts with substrate.

It belongs to the shikimate kinase family. As to quaternary structure, monomer. Mg(2+) serves as cofactor.

The protein localises to the cytoplasm. It carries out the reaction shikimate + ATP = 3-phosphoshikimate + ADP + H(+). It participates in metabolic intermediate biosynthesis; chorismate biosynthesis; chorismate from D-erythrose 4-phosphate and phosphoenolpyruvate: step 5/7. In terms of biological role, catalyzes the specific phosphorylation of the 3-hydroxyl group of shikimic acid using ATP as a cosubstrate. In Paracidovorax citrulli (strain AAC00-1) (Acidovorax citrulli), this protein is Shikimate kinase.